The primary structure comprises 214 residues: Soluble inorganic pyrophosphatase (214 aa).

The substrate site is built by lysine 64, arginine 78, and tyrosine 90. Positions 100, 105, and 137 each coordinate Mg(2+). Tyrosine 174 provides a ligand contact to substrate.

This sequence belongs to the PPase family. Mg(2+) serves as cofactor.

It is found in the cytoplasm. It carries out the reaction diphosphate + H2O = 2 phosphate + H(+). The chain is Soluble inorganic pyrophosphatase (IPP) from Oryza sativa subsp. indica (Rice).